Here is a 345-residue protein sequence, read N- to C-terminus: RDS/peripherin-like protein xRDS36 (345 aa).

The Cytoplasmic segment spans residues 1-24; the sequence is MVLFKAKFSFQRRVKLAQTLWLLS. A helical transmembrane segment spans residues 25–43; it reads WLSVLVGCLTFGMGIFLKV. Over 44-61 the chain is Lumenal; sequence QLWIHNEVMDNTTAHAVP. Residue asparagine 54 is glycosylated (N-linked (GlcNAc...) asparagine). The helical transmembrane segment at 62–80 threads the bilayer; the sequence is NTVITAGLVGILLGYFAGK. The Cytoplasmic portion of the chain corresponds to 81–99; sequence ISQASMDLTKYQRWKSFMM. The chain crosses the membrane as a helical span at residues 100–123; sequence PFFFLAILSCIVCLAALVLSVALR. Topologically, residues 124-264 are lumenal; it reads GTLEESLKIG…LGYYTGIMAT (141 aa). N-linked (GlcNAc...) asparagine glycosylation is present at asparagine 229. Residues 265-290 form a helical membrane-spanning segment; sequence NGAAVTLSFLLQASVLVSLRYVQTSM. At 291 to 345 the chain is on the cytoplasmic side; sequence DKIRDPDDVEADTEGFLLEKGVMETVNSSLEKIKDLFKSNQVETAEGGGEGAAGS.

This sequence belongs to the PRPH2/ROM1 family. Homodimer; disulfide-linked. Rod specific.

It is found in the membrane. This Xenopus laevis (African clawed frog) protein is RDS/peripherin-like protein xRDS36 (rds36).